A 459-amino-acid polypeptide reads, in one-letter code: Transcription factor 7-like 2 (459 aa).

Residues 1-11 (MPQLNGGGGDD) are compositionally biased toward gly residues. The interval 1-53 (MPQLNGGGGDDLGANDELISFKDEGEQEEKNSENSSAERDLADVKSSLVNESE) is CTNNB1-binding. Residues 1-96 (MPQLNGGGGD…AKRQDGGLFK (96 aa)) are disordered. Residues 19 to 43 (ISFKDEGEQEEKNSENSSAERDLAD) show a composition bias toward basic and acidic residues. Lys-22 participates in a covalent cross-link: Glycyl lysine isopeptide (Lys-Gly) (interchain with G-Cter in SUMO2). The span at 47–56 (SLVNESETNQ) shows a compositional bias: polar residues. A compositionally biased stretch (basic and acidic residues) spans 63-91 (EAERRPPPRSESFRDKSRESLEEAAKRQD). Phosphothreonine; by NLK occurs at positions 178 and 189. A mediates interaction with MAD2L2 region spans residues 178–372 (TPLITYSNEH…RRWHALSREE (195 aa)). Positions 295-305 (TVKQESSQSDV) are enriched in polar residues. Disordered stretches follow at residues 295–327 (TVKQ…KPHI) and 397–418 (RDNY…TNEH). Lys-297 is covalently cross-linked (Glycyl lysine isopeptide (Lys-Gly) (interchain with G-Cter in SUMO)). The span at 312–323 (KHQDSKKEEEKK) shows a compositional bias: basic and acidic residues. Residues 327 to 395 (IKKPLNAFML…LHMQLYPGWS (69 aa)) constitute a DNA-binding region (HMG box). The short motif at 402–408 (KKKKRKR) is the Nuclear localization signal element.

This sequence belongs to the TCF/LEF family. In terms of assembly, interacts with TGFB1I1. Interacts with SPIN1. Interacts with CTNNB1 (via the armadillo repeat); forms stable transcription complex. Interacts with EP300. Interacts with NLK. Interacts with CCDC85B (probably through the HMG box); prevents interaction with CTNNB1. Interacts with TNIK. Interacts with MAD2L2; prevents TCF7L2/TCF4 binding to promZIPK/DAPK3oters, negatively modulating its transcriptional activity. Interacts with ZIPK/DAPK3. Interacts with XIAP/BIRC4 and TLE3. Interacts with DDIT3/CHOP. The CTNNB1 and TCF7L2/TCF4 complex interacts with PML (isoform PML-4). Identified in a complex with CTNNB1 and FERMT2. Interacts with C11orf84/SPINDOC in a SPIN1-dependent manner. Interacts with DAZAP2; the interaction results in localization of DAZAP2 to the nucleus. In terms of processing, phosphorylated at Thr-178 and/or Thr-189 by NLK. Phosphorylation by NLK at these sites inhibits DNA-binding by TCF7L2/TCF4, thereby preventing transcriptional activation of target genes of the canonical Wnt/beta-catenin signaling pathway. Post-translationally, polysumoylated. Sumoylation is enhanced by PIAS family members and desumoylation is enhanced by SENP2. Sumoylation/desumoylation regulates TCF7L2/TCF4 transcription activity in the Wnt/beta-catenin signaling pathway without altering interaction with CTNNB1 nor binding to DNA. In terms of tissue distribution, detected in adult brain and liver, and at lower levels in intestine, with a clear increase from the distal colon to the duodenum. Detected at low levels in heart, lung, kidney, pituitary and testis.

The protein localises to the nucleus. The protein resides in the PML body. Functionally, participates in the Wnt signaling pathway and modulates MYC expression by binding to its promoter in a sequence-specific manner. Acts as a repressor in the absence of CTNNB1, and as activator in its presence. Activates transcription from promoters with several copies of the Tcf motif CCTTTGATC in the presence of CTNNB1. TLE1, TLE2, TLE3 and TLE4 repress transactivation mediated by TCF7L2/TCF4 and CTNNB1. Expression of dominant-negative mutants results in cell-cycle arrest in G1. Necessary for the maintenance of the epithelial stem-cell compartment of the small intestine. This Mus musculus (Mouse) protein is Transcription factor 7-like 2 (Tcf7l2).